The sequence spans 317 residues: Melanocyte-stimulating hormone receptor (317 aa).

Over 1-37 the chain is Extracellular; the sequence is MPVLGSQRRLLGSLNCTPPATLPLTLAPNRTGPQCLE. Asparagine 29 carries an N-linked (GlcNAc...) asparagine glycan. A helical transmembrane segment spans residues 38 to 63; that stretch reads VSIPDGLFLSLGLVSLVENVLVVAAI. The Cytoplasmic segment spans residues 64-72; sequence AKNRNLHSP. Residues 73–93 form a helical membrane-spanning segment; that stretch reads MYYFICCLAMSDLLVSVSNVL. Topologically, residues 94 to 118 are extracellular; the sequence is ETAVMLLLEAGVLATRAAVVQQLDN. The chain crosses the membrane as a helical span at residues 119–140; the sequence is VIDVLICSSMVSSLCFLGAIAV. Residues 141 to 163 are Cytoplasmic-facing; sequence DRYISIFYALRYHSVVTLPRAWR. Residues 164–183 traverse the membrane as a helical segment; sequence IIAAIWVASILTSVLSITYY. Topologically, residues 184–191 are extracellular; that stretch reads NHTVVLLC. The chain crosses the membrane as a helical span at residues 192–211; sequence LVGFFIAMLALMAVLYVHML. At 212–240 the chain is on the cytoplasmic side; sequence ARACQHARGIARLQKRQRPIHQGFGLKGA. The helical transmembrane segment at 241-266 threads the bilayer; sequence ATLTILLGVFFLCWGPFFLHLSLIVL. The Extracellular segment spans residues 267–279; that stretch reads CPQHPTCGCIFKN. A helical membrane pass occupies residues 280 to 300; sequence FNLFLALIICNAIVDPLIYAF. The Cytoplasmic segment spans residues 301–317; sequence RSQELRKTLQEVLQCSW. Cysteine 315 carries S-palmitoyl cysteine lipidation.

Belongs to the G-protein coupled receptor 1 family. Interacts with MGRN1, but does not undergo MGRN1-mediated ubiquitination; this interaction competes with GNAS-binding and thus inhibits agonist-induced cAMP production. Interacts with OPN3; the interaction results in a decrease in MC1R-mediated cAMP signaling and ultimately a decrease in melanin production in melanocytes.

The protein resides in the cell membrane. Receptor for MSH (alpha, beta and gamma) and ACTH. The activity of this receptor is mediated by G proteins which activate adenylate cyclase. Mediates melanogenesis, the production of eumelanin (black/brown) and phaeomelanin (red/yellow), via regulation of cAMP signaling in melanocytes. This Ovis aries (Sheep) protein is Melanocyte-stimulating hormone receptor (MC1R).